A 464-amino-acid chain; its full sequence is Soluble pyridine nucleotide transhydrogenase (464 aa).

Residue 35–44 (DSRRQVGGNC) participates in FAD binding.

This sequence belongs to the class-I pyridine nucleotide-disulfide oxidoreductase family. The cofactor is FAD.

The protein resides in the cytoplasm. The catalysed reaction is NAD(+) + NADPH = NADH + NADP(+). Conversion of NADPH, generated by peripheral catabolic pathways, to NADH, which can enter the respiratory chain for energy generation. The protein is Soluble pyridine nucleotide transhydrogenase of Pseudomonas fluorescens (strain Pf0-1).